The sequence spans 156 residues: MSRRHSAEKREINPDPKFGDLIVTKFMNAVMYDGKKSVAETIVYGALDQVQSKTKQEPVTVFHQALDNVAPHVEVRSRRVGGATYQVPVDVRPERRQALAIRWLIAAARNRNETTMIDRLSGELMDAANNRGTAVKKREDTHKMAEANRAFAHYRW.

It belongs to the universal ribosomal protein uS7 family. Part of the 30S ribosomal subunit. Contacts proteins S9 and S11.

Its function is as follows. One of the primary rRNA binding proteins, it binds directly to 16S rRNA where it nucleates assembly of the head domain of the 30S subunit. Is located at the subunit interface close to the decoding center, probably blocks exit of the E-site tRNA. This chain is Small ribosomal subunit protein uS7, found in Mesorhizobium japonicum (strain LMG 29417 / CECT 9101 / MAFF 303099) (Mesorhizobium loti (strain MAFF 303099)).